The sequence spans 260 residues: DNA repair protein RecO (260 aa).

Belongs to the RecO family.

Its function is as follows. Involved in DNA repair and RecF pathway recombination. This chain is DNA repair protein RecO, found in Chlorobaculum parvum (strain DSM 263 / NCIMB 8327) (Chlorobium vibrioforme subsp. thiosulfatophilum).